Here is an 826-residue protein sequence, read N- to C-terminus: Putative ankyrin repeat protein RBE_0220 (826 aa).

ANK repeat units lie at residues 308-337 (LGTS…DQHA), 342-371 (IDMS…DPNY), 375-404 (DNDT…DPNK), 445-474 (NDFT…DVNA), 478-507 (DGFT…NPDV), 512-541 (TKSS…NPNL), 545-574 (DGTT…DINK), and 578-607 (NGDN…DLKK).

This Rickettsia bellii (strain RML369-C) protein is Putative ankyrin repeat protein RBE_0220.